Here is a 974-residue protein sequence, read N- to C-terminus: Translation initiation factor IF-2 (974 aa).

The tract at residues 31 to 376 is disordered; sequence FVKSASSTVE…APAVGGVRLP (346 aa). Residues 52–68 are compositionally biased toward low complexity; it reads PSAKSADSAARPAAKPG. The segment covering 83 to 96 has biased composition (pro residues); sequence GPRPGPKPAAPAPA. Low complexity predominate over residues 97–133; that stretch reads APAAAAPAATPAAQAPAPAAPAASTATPAAPASNAPK. Residues 134–147 are compositionally biased toward pro residues; the sequence is PGRPTPAAPAPAAP. Low complexity-rich tracts occupy residues 148 to 166 and 179 to 191; these read AAPA…STGA and RVGN…APAE. Pro residues-rich tracts occupy residues 195-210 and 253-266; these read PRPA…PRPA and RPSP…PNPG. A compositionally biased stretch (low complexity) spans 267-277; that stretch reads AMPARSARPAP. The segment covering 279 to 332 has biased composition (gly residues); the sequence is GRPGRPGGAPGGRPGGGGGGYRGGGAPGAGAGAPGGGAPAGGFRGRPGGGGRPG. A compositionally biased stretch (basic residues) spans 349–358; that stretch reads RRGRKSKRQK. One can recognise a tr-type G domain in the interval 470–641; it reads SRPPVVTVMG…AVLLTADAAL (172 aa). Residues 479–486 are G1; the sequence is GHVDHGKT. 479–486 contributes to the GTP binding site; sequence GHVDHGKT. Positions 504-508 are G2; sequence GITQH. The G3 stretch occupies residues 529 to 532; sequence DTPG. Residues 529–533 and 583–586 contribute to the GTP site; these read DTPGH and NKID. The tract at residues 583–586 is G4; the sequence is NKID. The interval 619-621 is G5; it reads SAK.

Belongs to the TRAFAC class translation factor GTPase superfamily. Classic translation factor GTPase family. IF-2 subfamily.

The protein localises to the cytoplasm. In terms of biological role, one of the essential components for the initiation of protein synthesis. Protects formylmethionyl-tRNA from spontaneous hydrolysis and promotes its binding to the 30S ribosomal subunits. Also involved in the hydrolysis of GTP during the formation of the 70S ribosomal complex. The polypeptide is Translation initiation factor IF-2 (Rhodococcus opacus (strain B4)).